The following is a 268-amino-acid chain: Small ribosomal subunit protein uS3 (268 aa).

One can recognise a KH type-2 domain in the interval 39-107 (VREYLKKKLK…PVHVNIEEIR (69 aa)). Positions 216–268 (VEEVAEEKRPRRNARPGGDRRPRRDGEGGGPAGARRGAPRRAGGAGGDGKTGE) are disordered. Positions 232–242 (GGDRRPRRDGE) are enriched in basic and acidic residues. A compositionally biased stretch (low complexity) spans 248-257 (GARRGAPRRA). The segment covering 258–268 (GGAGGDGKTGE) has biased composition (gly residues).

Belongs to the universal ribosomal protein uS3 family. In terms of assembly, part of the 30S ribosomal subunit. Forms a tight complex with proteins S10 and S14.

Binds the lower part of the 30S subunit head. Binds mRNA in the 70S ribosome, positioning it for translation. The sequence is that of Small ribosomal subunit protein uS3 from Paraburkholderia phytofirmans (strain DSM 17436 / LMG 22146 / PsJN) (Burkholderia phytofirmans).